The following is a 336-amino-acid chain: tRNA N6-adenosine threonylcarbamoyltransferase (336 aa).

2 residues coordinate Fe cation: H112 and H116. Substrate-binding positions include L136–G140, D169, G182, and N276. D304 lines the Fe cation pocket.

The protein belongs to the KAE1 / TsaD family. Fe(2+) serves as cofactor.

It localises to the cytoplasm. The enzyme catalyses L-threonylcarbamoyladenylate + adenosine(37) in tRNA = N(6)-L-threonylcarbamoyladenosine(37) in tRNA + AMP + H(+). Its function is as follows. Required for the formation of a threonylcarbamoyl group on adenosine at position 37 (t(6)A37) in tRNAs that read codons beginning with adenine. Is involved in the transfer of the threonylcarbamoyl moiety of threonylcarbamoyl-AMP (TC-AMP) to the N6 group of A37, together with TsaE and TsaB. TsaD likely plays a direct catalytic role in this reaction. The chain is tRNA N6-adenosine threonylcarbamoyltransferase from Francisella philomiragia subsp. philomiragia (strain ATCC 25017 / CCUG 19701 / FSC 153 / O#319-036).